The sequence spans 150 residues: uncharacterized protein (150 aa).

This is an uncharacterized protein from Azospirillum brasilense.